Reading from the N-terminus, the 102-residue chain is Cell division topological specificity factor (102 aa).

Belongs to the MinE family.

In terms of biological role, prevents the cell division inhibition by proteins MinC and MinD at internal division sites while permitting inhibition at polar sites. This ensures cell division at the proper site by restricting the formation of a division septum at the midpoint of the long axis of the cell. This is Cell division topological specificity factor from Synechococcus sp. (strain CC9605).